Consider the following 227-residue polypeptide: 7-cyano-7-deazaguanine synthase (227 aa).

7–17 is a binding site for ATP; the sequence is LSGGMDSLVTT. Zn(2+) contacts are provided by Cys187, Cys195, Cys198, and Cys201.

It belongs to the QueC family. Requires Zn(2+) as cofactor.

It carries out the reaction 7-carboxy-7-deazaguanine + NH4(+) + ATP = 7-cyano-7-deazaguanine + ADP + phosphate + H2O + H(+). The protein operates within purine metabolism; 7-cyano-7-deazaguanine biosynthesis. Catalyzes the ATP-dependent conversion of 7-carboxy-7-deazaguanine (CDG) to 7-cyano-7-deazaguanine (preQ(0)). The sequence is that of 7-cyano-7-deazaguanine synthase from Chlorobium luteolum (strain DSM 273 / BCRC 81028 / 2530) (Pelodictyon luteolum).